The primary structure comprises 202 residues: Probable ATP-dependent Clp protease proteolytic subunit 3 (202 aa).

Serine 101 functions as the Nucleophile in the catalytic mechanism. The active site involves histidine 126.

The protein belongs to the peptidase S14 family. As to quaternary structure, fourteen ClpP subunits assemble into 2 heptameric rings which stack back to back to give a disk-like structure with a central cavity, resembling the structure of eukaryotic proteasomes.

It is found in the cytoplasm. The catalysed reaction is Hydrolysis of proteins to small peptides in the presence of ATP and magnesium. alpha-casein is the usual test substrate. In the absence of ATP, only oligopeptides shorter than five residues are hydrolyzed (such as succinyl-Leu-Tyr-|-NHMec, and Leu-Tyr-Leu-|-Tyr-Trp, in which cleavage of the -Tyr-|-Leu- and -Tyr-|-Trp bonds also occurs).. In terms of biological role, cleaves peptides in various proteins in a process that requires ATP hydrolysis. Has a chymotrypsin-like activity. Plays a major role in the degradation of misfolded proteins. The chain is Probable ATP-dependent Clp protease proteolytic subunit 3 from Synechocystis sp. (strain ATCC 27184 / PCC 6803 / Kazusa).